The following is a 237-amino-acid chain: tRNA (guanine-N(1)-)-methyltransferase (237 aa).

Residues G115 and 134 to 139 each bind S-adenosyl-L-methionine; that span reads LGDFVL.

This sequence belongs to the RNA methyltransferase TrmD family. As to quaternary structure, homodimer.

Its subcellular location is the cytoplasm. It catalyses the reaction guanosine(37) in tRNA + S-adenosyl-L-methionine = N(1)-methylguanosine(37) in tRNA + S-adenosyl-L-homocysteine + H(+). Its function is as follows. Specifically methylates guanosine-37 in various tRNAs. This is tRNA (guanine-N(1)-)-methyltransferase from Synechococcus sp. (strain RCC307).